A 122-amino-acid polypeptide reads, in one-letter code: MIQSQTYLNVADNSGARKLMCIRVLGAGNRNTANIGDIIIAIIKEAAPNMPLEESEVVRAVVIRTCKELKRSDGMIIRSDDNAAVVIDQKGNPRGTRVFGSVTEELRELNFTKIISLAPEVL.

The protein belongs to the universal ribosomal protein uL14 family. Part of the 50S ribosomal subunit.

Its subcellular location is the plastid. It localises to the chloroplast. Binds to 23S rRNA. The polypeptide is Large ribosomal subunit protein uL14c (Cryptomeria japonica (Japanese cedar)).